The primary structure comprises 375 residues: Regulatory protein E2 (375 aa).

The segment at 1 to 200 is transactivation domain; sequence MENLCQRLNA…QVICCPEFVS (200 aa). Positions 264 to 292 are disordered; the sequence is ATQPGQSVDYTNNNLHSTSGGHHPGRDTS. The span at 266 to 283 shows a compositional bias: polar residues; it reads QPGQSVDYTNNNLHSTSG. A DNA-binding domain region spans residues 296–375; sequence TVFIVHLKGD…ITSTLGIMSL (80 aa). Residue Lys303 forms a Glycyl lysine isopeptide (Lys-Gly) (interchain with G-Cter in SUMO) linkage.

Belongs to the papillomaviridae E2 protein family. In terms of assembly, binds DNA as homodimer. Interacts with protein E1; this interaction greatly increases E1 DNA-binding activity. Interacts with protein L1; this interaction enhances E2-dependent replication and transcription activation. Interacts with protein L2; this interaction inhibits E2 transcriptional activity but not DNA replication function E2. Interacts with protein E7; this interaction inhibits E7 oncogenic activity. Interacts with host TAF1; this interaction modulates E2-dependent transcriptional regulation. Interacts with host BRD4; this interaction mediates E2 transcriptional activation function. Additionally, the interaction with host BRD4 on mitotic chromosomes mediates tethering of the viral genome. Interacts with host TOPBP1; this interaction is required for optimal viral DNA replication. In terms of processing, phosphorylated. Post-translationally, sumoylation plays a regulatory role in E2 transcriptional activity.

Its subcellular location is the host nucleus. Its function is as follows. Plays a role in the initiation of viral DNA replication. A dimer of E2 interacts with a dimer of E1 in order to improve specificity of E1 DNA binding activity. Once the complex recognizes and binds DNA at specific sites, the E2 dimer is removed from DNA. E2 also regulates viral transcription through binding to the E2RE response element (5'-ACCNNNNNNGGT-3') present in multiple copies in the regulatory regions of the viral genome. Activates or represses transcription depending on E2RE's position with regards to proximal promoter elements including the TATA-box. Repression occurs by sterically hindering the assembly of the transcription initiation complex. The chain is Regulatory protein E2 from Human papillomavirus type 26.